The primary structure comprises 214 residues: Cytochrome b (214 aa).

4 helical membrane passes run 31–51 (FGSMLLICLMLQTLTGFFLAI), 75–96 (WTMQNLHAISASLFFICIYIHI), 111–131 (WLSGVTLLFTLMATAFFGYVL), and 176–196 (FFALHFILPFIIISLSSAHIM). Heme b-binding residues include His81 and His95. 2 residues coordinate heme b: His180 and His194. His199 is an a ubiquinone binding site.

This sequence belongs to the cytochrome b family. In terms of assembly, the cytochrome bc1 complex contains 3 respiratory subunits (MT-CYB, CYC1 and UQCRFS1), 2 core proteins (UQCRC1 and UQCRC2) and probably 6 low-molecular weight proteins. Requires heme b as cofactor.

The protein localises to the mitochondrion inner membrane. Component of the ubiquinol-cytochrome c reductase complex (complex III or cytochrome b-c1 complex) that is part of the mitochondrial respiratory chain. The b-c1 complex mediates electron transfer from ubiquinol to cytochrome c. Contributes to the generation of a proton gradient across the mitochondrial membrane that is then used for ATP synthesis. This chain is Cytochrome b (MT-CYB), found in Elapsoidea semiannulata (Angolan garter snake).